The primary structure comprises 852 residues: MMVDCQSSTQEIGEELINGVIYSISLRKVQLHQGATKGQRWLGCENESALNLYETCKVRTVKAGTLEKLVEHLVPAFQGSDLSYVTVFLCTYRAFTTTQQVLDLLFKRYGRCDALTASSRYGCILPYSSEDGGPQDQLKNAISSILGTWLDQYSEDFCQPPDFPCLKQLVAYVQLNMPGSDLERRAHLLLAQLEDLEPSEAESEALSPAPVLSLKPASQLEPALLLTPSQVVTSTPVREPAAAPVPVLASSPVVAPAPELEPVPEPPQEPEPSLALAPELEPAVSQSLELESAPVPTPALEPSWSLPEATENGLTEKPHLLLFPPDLVAEQFTLMDAELFKKVVPYHCLGSIWSQRDKKGKEHLAPTIRATVAQFNNVANCVITTCLGDQSMKAPDRARVVEHWIEVARECRALKNFSSLYAILSALQSNAIHRLKKTWEEVSRDSFRVFQKLSEIFSDENNYSLSRELLIKEGTSKFATLEMNPRRAQRRQKETGVIQGTVPYLGTFLTDLVMLDTAMKDYLYGRLINFEKRRKEFEVIAQIKLLQSACNNYSIAPEEHFGTWFRAMERLSEAESYTLSCELEPPSESASNTLRSKKSTAIVKRWSDRQAPSTELSTSSSAHSKSCDQLRCSPYLGSGDITDALSVHSAGSSSSDVEEINMSFVPESPDGQEKKFWESASQSSPETSGISSASSSTSSSSASTTPVSTTRTHKRSVSGVCSYSSSLPLYNQQVGDCCIIRVSLDVDNGNMYKSILVTSQDKAPTVIRKAMDKHNLDEDEPEDYELVQIISEDHKLKIPENANVFYAMNSTANYDFILKKRTFTKGAKVKHGASSTLPRMKQKGLRIAKGIF.

The 138-residue stretch at Lys57–Glu194 folds into the N-terminal Ras-GEF domain. A Ras-GEF domain is found at Pro324–Pro586. 2 disordered regions span residues Trp606–Cys627 and Val665–Arg711. 2 stretches are compositionally biased toward low complexity: residues Ser613–Ser624 and Ser683–Thr710. Positions Asp736–Phe823 constitute a Ras-associating domain. Tyr752 bears the Phosphotyrosine mark.

In terms of assembly, interacts with RIT1 and RIT2. Interacts with OOG1. Interacts with TRAF3. Interacts with HRAS. Post-translationally, phosphorylation of Tyr-752 by MET blocks HRAS binding.

Its subcellular location is the cytoplasm. It is found in the nucleus. Its function is as follows. Functions as a guanine nucleotide exchange factor (GEF) activating either RalA or RalB GTPases and plays an important role in intracellular transport. Interacts and acts as an effector molecule for R-Ras, H-Ras, K-Ras, and Rap. During bacterial clearance, recognizes 'Lys-33'-linked polyubiquitinated TRAF3 and subsequently mediates assembly of the exocyst complex. The chain is Ral guanine nucleotide dissociation stimulator (Ralgds) from Mus musculus (Mouse).